A 274-amino-acid polypeptide reads, in one-letter code: Orotidine 5'-phosphate decarboxylase (274 aa).

The active-site Proton donor is the Lys-95.

Belongs to the OMP decarboxylase family. Type 2 subfamily.

It carries out the reaction orotidine 5'-phosphate + H(+) = UMP + CO2. Its pathway is pyrimidine metabolism; UMP biosynthesis via de novo pathway; UMP from orotate: step 2/2. The sequence is that of Orotidine 5'-phosphate decarboxylase from Variovorax paradoxus (strain S110).